Reading from the N-terminus, the 452-residue chain is Class E vacuolar protein-sorting machinery protein HSE1 (452 aa).

The residue at position 2 (S2) is an N-acetylserine. A VHS domain is found at 15 to 145; that stretch reads ATDPKLRSDN…KIKRKAPYLV (131 aa). Disordered regions lie at residues 144 to 166 and 187 to 212; these read LVQP…DDEE and QEKE…PAHK. Phosphoserine is present on S162. Positions 162–181 constitute a UIM domain; it reads SDDEELQKALKMSLFEYEKQ. Positions 197-207 are enriched in low complexity; that stretch reads QQQQQHQQQNQ. Residues 217–276 enclose the SH3 domain; that stretch reads TVVRRVRALYDLTTNEPDELSFRKGDVITVLEQVYRDWWKGALRGNMGIFPLNYVTPIVE. The tract at residues 389-452 is disordered; that stretch reads AGMTHANNTP…VSQPPPGYEQ (64 aa). Polar residues predominate over residues 393–433; the sequence is HANNTPVMPPQRQSYQSNEYSPYPSNLPIQHPTNSANNTPQ.

It belongs to the STAM family. In terms of assembly, component of the ESCRT-0 complex composed of HSE1 and VPS27. Interacts with the ESCRT-I subunit VPS23, the UBP7 deubiquitinase and the E3 ligase RSP5. May form a complex composed of VPS27, HSE1 and DOA1. Interacts (via SH3 domain) with DOA1.

Its subcellular location is the endosome membrane. Component of the ESCRT-0 complex which is the sorting receptor for ubiquitinated cargo proteins at the multivesicular body (MVB) and recruits ESCRT-I to the MVB outer membrane. This is Class E vacuolar protein-sorting machinery protein HSE1 (HSE1) from Saccharomyces cerevisiae (strain ATCC 204508 / S288c) (Baker's yeast).